Consider the following 233-residue polypeptide: Snake venom serine protease ussurase (233 aa).

The 224-residue stretch at 1–224 (VIGGVECNIN…YTDWIQSIIS (224 aa)) folds into the Peptidase S1 domain. Cystine bridges form between cysteine 7–cysteine 138, cysteine 25–cysteine 41, cysteine 73–cysteine 231, cysteine 117–cysteine 185, cysteine 149–cysteine 164, and cysteine 175–cysteine 200. Histidine 40 serves as the catalytic Charge relay system. Residue asparagine 54 is glycosylated (N-linked (GlcNAc...) asparagine). Aspartate 85 (charge relay system) is an active-site residue. The active-site Charge relay system is the serine 179.

The protein belongs to the peptidase S1 family. Snake venom subfamily. As to quaternary structure, monomer. Expressed by the venom gland.

Its subcellular location is the secreted. Functionally, snake venom serine protease that may act in the hemostasis system of the prey. This is Snake venom serine protease ussurase from Gloydius ussuriensis (Ussuri mamushi).